Reading from the N-terminus, the 177-residue chain is DELTA-stichotoxin-Hmg2b (177 aa).

The tract at residues 3 to 12 is plays an important role in the hemolytic activity; that stretch reads ALAGTIIAGA. An N-terminal region region spans residues 11 to 30; that stretch reads GASLGFQILDKVLGELGKVS. S54, V87, S105, P107, Y133, Y137, and Y138 together coordinate phosphocholine.

This sequence belongs to the actinoporin family. Sea anemone subfamily. Octamer or nonamer in membranes. Monomer in the soluble state.

Its subcellular location is the secreted. It localises to the nematocyst. The protein localises to the target cell membrane. Its function is as follows. Pore-forming protein that forms cations-selective hydrophilic pores of around 1 nm and causes cytolysis. Pore formation is a multi-step process that involves specific recognition of membrane sphingomyelin (but neither cholesterol nor phosphatidylcholine) using aromatic rich region and adjacent phosphocholine (POC) binding site, firm binding to the membrane (mainly driven by hydrophobic interactions) accompanied by the transfer of the N-terminal region to the lipid-water interface and finally pore formation after oligomerization of monomers This toxin shows hemolytic activity. The sequence is that of DELTA-stichotoxin-Hmg2b from Heteractis magnifica (Magnificent sea anemone).